A 160-amino-acid polypeptide reads, in one-letter code: Putative NrdI-like protein (160 aa).

Belongs to the NrdI family.

This Streptococcus pyogenes serotype M6 (strain ATCC BAA-946 / MGAS10394) protein is Putative NrdI-like protein.